Consider the following 94-residue polypeptide: MKLTCMMIVALLFLTAWTFVTAVDSKNELENRGGWGQAGGWGKLFPMARDEMKNSEVSKLDNKRKCAAAGEACVIPIIGNVFCCKGYCLFVCIS.

Positions 1–22 (MKLTCMMIVALLFLTAWTFVTA) are cleaved as a signal peptide. Residues 23-62 (VDSKNELENRGGWGQAGGWGKLFPMARDEMKNSEVSKLDN) constitute a propeptide that is removed on maturation. Intrachain disulfides connect cysteine 66–cysteine 84, cysteine 73–cysteine 88, and cysteine 83–cysteine 92.

Belongs to the conotoxin O1 superfamily. As to expression, expressed by the venom duct.

The protein localises to the secreted. This Conus quercinus (Oak cone) protein is Conotoxin Qc6.1.